Here is a 314-residue protein sequence, read N- to C-terminus: DNA-directed RNA polymerase subunit alpha (314 aa).

The alpha N-terminal domain (alpha-NTD) stretch occupies residues 1-228 (MIEIEKPRIE…EHLNIFVGLT (228 aa)). An alpha C-terminal domain (alpha-CTD) region spans residues 245-314 (KEKVLEMSIE…DLGLGLRKED (70 aa)).

This sequence belongs to the RNA polymerase alpha chain family. In terms of assembly, homodimer. The RNAP catalytic core consists of 2 alpha, 1 beta, 1 beta' and 1 omega subunit. When a sigma factor is associated with the core the holoenzyme is formed, which can initiate transcription.

It catalyses the reaction RNA(n) + a ribonucleoside 5'-triphosphate = RNA(n+1) + diphosphate. In terms of biological role, DNA-dependent RNA polymerase catalyzes the transcription of DNA into RNA using the four ribonucleoside triphosphates as substrates. This is DNA-directed RNA polymerase subunit alpha from Staphylococcus haemolyticus (strain JCSC1435).